A 455-amino-acid chain; its full sequence is Bifunctional protein GlmU (455 aa).

The interval 1–229 is pyrophosphorylase; it reads MLNSAMSVVI…ISETEGVNNR (229 aa). UDP-N-acetyl-alpha-D-glucosamine is bound by residues 11–14, K25, Q76, 81–82, 103–105, G140, E154, N169, and N227; these read LAAG, GT, and YGD. Residue D105 participates in Mg(2+) binding. Position 227 (N227) interacts with Mg(2+). The linker stretch occupies residues 230-250; the sequence is LQLSRLERIYQAEQAEKLLLA. The N-acetyltransferase stretch occupies residues 251 to 455; the sequence is GVMLRDPARF…KQGWQRPVKK (205 aa). R333 and K351 together coordinate UDP-N-acetyl-alpha-D-glucosamine. The active-site Proton acceptor is the H363. Residues Y366 and N377 each coordinate UDP-N-acetyl-alpha-D-glucosamine. Acetyl-CoA-binding positions include A380, 386–387, S405, A423, and R440; that span reads NY.

This sequence in the N-terminal section; belongs to the N-acetylglucosamine-1-phosphate uridyltransferase family. The protein in the C-terminal section; belongs to the transferase hexapeptide repeat family. As to quaternary structure, homotrimer. Requires Mg(2+) as cofactor.

The protein resides in the cytoplasm. The catalysed reaction is alpha-D-glucosamine 1-phosphate + acetyl-CoA = N-acetyl-alpha-D-glucosamine 1-phosphate + CoA + H(+). It carries out the reaction N-acetyl-alpha-D-glucosamine 1-phosphate + UTP + H(+) = UDP-N-acetyl-alpha-D-glucosamine + diphosphate. Its pathway is nucleotide-sugar biosynthesis; UDP-N-acetyl-alpha-D-glucosamine biosynthesis; N-acetyl-alpha-D-glucosamine 1-phosphate from alpha-D-glucosamine 6-phosphate (route II): step 2/2. It participates in nucleotide-sugar biosynthesis; UDP-N-acetyl-alpha-D-glucosamine biosynthesis; UDP-N-acetyl-alpha-D-glucosamine from N-acetyl-alpha-D-glucosamine 1-phosphate: step 1/1. It functions in the pathway bacterial outer membrane biogenesis; LPS lipid A biosynthesis. Catalyzes the last two sequential reactions in the de novo biosynthetic pathway for UDP-N-acetylglucosamine (UDP-GlcNAc). The C-terminal domain catalyzes the transfer of acetyl group from acetyl coenzyme A to glucosamine-1-phosphate (GlcN-1-P) to produce N-acetylglucosamine-1-phosphate (GlcNAc-1-P), which is converted into UDP-GlcNAc by the transfer of uridine 5-monophosphate (from uridine 5-triphosphate), a reaction catalyzed by the N-terminal domain. The protein is Bifunctional protein GlmU of Salmonella arizonae (strain ATCC BAA-731 / CDC346-86 / RSK2980).